A 44-amino-acid polypeptide reads, in one-letter code: 2S seed storage albumin protein (44 aa).

2 disulfides stabilise this stretch: Cys7-Cys42 and Cys19-Cys31.

Belongs to the 2S seed storage albumins family. In terms of assembly, the mature protein consists of a small and a large chain linked by 2 disulfide bonds.

This is a 2S seed storage protein. Has antifungal activity. Inhibits spore germination in H.sativum (IC(50)=62.5 ug/ml) and P.betae (IC(50)=62.5 ug/ml). Inhibits growth of H.sativum, V.albo-atrum and P.infestans. In Taraxacum officinale (Common dandelion), this protein is 2S seed storage albumin protein.